Here is an 89-residue protein sequence, read N- to C-terminus: Mitochondrial import inner membrane translocase subunit Tim9 (89 aa).

A2 carries the N-acetylalanine modification. Positions 28–52 (CFLDCVKDFTTREVKPEEVTCSEHC) match the Twin CX3C motif motif. Intrachain disulfides connect C28–C52 and C32–C48.

This sequence belongs to the small Tim family. Heterohexamer; composed of 3 copies of TIMM9 and 3 copies of TIMM10/TIM10A, named soluble 70 kDa complex. The complex forms a 6-bladed alpha-propeller structure and associates with the TIMM22 component of the TIM22 complex. Interacts with multi-pass transmembrane proteins in transit. Also forms a complex composed of TIMM9, TIMM10/TIM10A and FXC1/TIM10B.

Its subcellular location is the mitochondrion inner membrane. Functionally, mitochondrial intermembrane chaperone that participates in the import and insertion of multi-pass transmembrane proteins into the mitochondrial inner membrane. May also be required for the transfer of beta-barrel precursors from the TOM complex to the sorting and assembly machinery (SAM complex) of the outer membrane. Acts as a chaperone-like protein that protects the hydrophobic precursors from aggregation and guide them through the mitochondrial intermembrane space. This chain is Mitochondrial import inner membrane translocase subunit Tim9 (Timm9), found in Rattus norvegicus (Rat).